Consider the following 798-residue polypeptide: MRVIRAAAALNSSCAASSRQGARYASLACRTALTSSPLAPCYSARLSGLRYFTKTHAPRAASAAEAALKQAKELAAANMTPEAAAARMTPEEAKRLSMVRNIGIAAHIDSGKTTVSERILFYTGRTKAIHEVRGRDGVGAKMDSMELERERGITIQSAATFADWKKVENGVEETYHFNLIDTPGHIDFTIEVERAMRVLDGAVMVLCAVSGVQSQTITVDRQMKRYNVPRISFVNKMDRMGSNPFKAVEMINSKLKIPAAAVQIPIGSEKEFEGVVDLIHMRAIRNDGLRGINVRVSNTIPENLKELAEQKRQELIEKLADVDDEIAEMFLEEKTPTPEQIKAAIRRATIGLKFTPVLMGSALADKSVQPMLDAVCDYLPNPGNVDNMALDRSKKEEPVKLLPYDSLPFVGLAFKLEENPYGQLTYIRVYQGTLKKGQYLFNARNDKKVRIPRIVRMHSNEMEDVNEIGAGEICAVFGVECASGDTFTDGRLPYGMSSMFVPDSVMSLSIKPKRSSDADAFSKAMNRFMREDPTFRLHVDEESEETIISGMGELHLDIYVERLRREYKVDCETGKPRVAYRETISKRAEYDFLLKRQSGGPGDYARVVGWIEPNVENAEGNKFETKVVGGNIPDKYLAACGKGFEEACIKGPLLGHKVIGAHMVVTDGATHVTDSSDYAFNLATQMAFRKAFPDAGGAVLEPLMKTTITAPAEFQGNILMLMNKRGSIVDTEVGADEFTMIAECSLNAMFGFSTHLRAATQGKGEFSMEFSHYAPAPPHLQKELVAQYEKELEAKRSK.

A mitochondrion-targeting transit peptide spans 1–24 (MRVIRAAAALNSSCAASSRQGARY). Residues 97–383 (SMVRNIGIAA…AVCDYLPNPG (287 aa)) enclose the tr-type G domain. GTP is bound by residues 106-113 (AHIDSGKT), 181-185 (DTPGH), and 235-238 (NKMD).

Belongs to the TRAFAC class translation factor GTPase superfamily. Classic translation factor GTPase family. EF-G/EF-2 subfamily.

The protein localises to the mitochondrion. The protein operates within protein biosynthesis; polypeptide chain elongation. Mitochondrial GTPase that catalyzes the GTP-dependent ribosomal translocation step during translation elongation. During this step, the ribosome changes from the pre-translocational (PRE) to the post-translocational (POST) state as the newly formed A-site-bound peptidyl-tRNA and P-site-bound deacylated tRNA move to the P and E sites, respectively. Catalyzes the coordinated movement of the two tRNA molecules, the mRNA and conformational changes in the ribosome. The protein is Elongation factor G, mitochondrial of Chaetomium globosum (strain ATCC 6205 / CBS 148.51 / DSM 1962 / NBRC 6347 / NRRL 1970) (Soil fungus).